Here is a 229-residue protein sequence, read N- to C-terminus: Cytochrome c oxidase subunit 2 (229 aa).

Over 1–26 (MSTWANLGLQDSASPLMEQLIFFHDH) the chain is Mitochondrial intermembrane. Residues 27-48 (ALLILVMITVLVGYLMFMLFFN) traverse the membrane as a helical segment. Topologically, residues 49–62 (SYVNRFLLHGQLIE) are mitochondrial matrix. Residues 63–82 (MIWTILPAIILLFIAMPSLR) traverse the membrane as a helical segment. Residues 83 to 229 (LLYLLDEINE…IKWISNSVNS (147 aa)) are Mitochondrial intermembrane-facing. Cu cation is bound by residues His-161, Cys-196, Glu-198, Cys-200, His-204, and Met-207. Glu-198 is a binding site for Mg(2+).

This sequence belongs to the cytochrome c oxidase subunit 2 family. As to quaternary structure, component of the cytochrome c oxidase (complex IV, CIV), a multisubunit enzyme composed of a catalytic core of 3 subunits and several supernumerary subunits. The complex exists as a monomer or a dimer and forms supercomplexes (SCs) in the inner mitochondrial membrane with ubiquinol-cytochrome c oxidoreductase (cytochrome b-c1 complex, complex III, CIII). It depends on Cu cation as a cofactor.

The protein localises to the mitochondrion inner membrane. It catalyses the reaction 4 Fe(II)-[cytochrome c] + O2 + 8 H(+)(in) = 4 Fe(III)-[cytochrome c] + 2 H2O + 4 H(+)(out). Functionally, component of the cytochrome c oxidase, the last enzyme in the mitochondrial electron transport chain which drives oxidative phosphorylation. The respiratory chain contains 3 multisubunit complexes succinate dehydrogenase (complex II, CII), ubiquinol-cytochrome c oxidoreductase (cytochrome b-c1 complex, complex III, CIII) and cytochrome c oxidase (complex IV, CIV), that cooperate to transfer electrons derived from NADH and succinate to molecular oxygen, creating an electrochemical gradient over the inner membrane that drives transmembrane transport and the ATP synthase. Cytochrome c oxidase is the component of the respiratory chain that catalyzes the reduction of oxygen to water. Electrons originating from reduced cytochrome c in the intermembrane space (IMS) are transferred via the dinuclear copper A center (CU(A)) of subunit 2 and heme A of subunit 1 to the active site in subunit 1, a binuclear center (BNC) formed by heme A3 and copper B (CU(B)). The BNC reduces molecular oxygen to 2 water molecules using 4 electrons from cytochrome c in the IMS and 4 protons from the mitochondrial matrix. This is Cytochrome c oxidase subunit 2 (mt:CoII) from Drosophila miranda (Fruit fly).